We begin with the raw amino-acid sequence, 694 residues long: Cyclic nucleotide-gated ion channel 4 (694 aa).

The segment covering 1 to 15 has biased composition (basic and acidic residues); it reads MATEQEFTRASRFSR. The disordered stretch occupies residues 1–64; the sequence is MATEQEFTRA…RIGLTCGGRR (64 aa). Residues 1–92 are Cytoplasmic-facing; it reads MATEQEFTRA…RSKWVREWNK (92 aa). Residues 24-53 show a composition bias toward acidic residues; it reads SEEDNTEEEDEEEEEMEEIEEEEEEEEEED. Residues 93–113 form a helical membrane-spanning segment; that stretch reads VFLLVCATGLFVDPLFLYTLS. The Extracellular segment spans residues 114–126; sequence VSDTCMCLLVDGW. Residues 127-147 traverse the membrane as a helical segment; sequence LALTVTALRSMTDLLHLWNIW. Residues 148 to 187 lie on the Cytoplasmic side of the membrane; that stretch reads IQFKIARRWPYPGGDSDGDTNKGGGTRGSTRVAPPYVKKN. The chain crosses the membrane as a helical span at residues 188–208; it reads GFFFDLFVILPLPQVVLWVVI. The Extracellular portion of the chain corresponds to 209-216; the sequence is PSLLKRGS. A helical transmembrane segment spans residues 217-237; that stretch reads VTLVVSVLLVTFLFQYLPKIY. At 238–251 the chain is on the cytoplasmic side; sequence HSIRHLRRNATLSG. The helical transmembrane segment at 252-272 threads the bilayer; it reads YIFGTVWWGIALNMIAYFVAA. Over 273 to 392 the chain is Extracellular; that stretch reads HAAGACWYLL…LESTTEWSEV (120 aa). Residues 393 to 413 traverse the membrane as a helical segment; the sequence is VFNIIVLTSGLLLVTMLIGNI. At 414-694 the chain is on the cytoplasmic side; it reads KVFLHATTSK…KPNPDDFDDY (281 aa). A nucleoside 3',5'-cyclic phosphate contacts are provided by residues 496-626 and Asp565; that span reads LFQH…ARYY. Positions 610 to 626 are calmodulin-binding; the sequence is FRYTFVNEKVKRSARYY. An IQ domain is found at 631–660; the sequence is RTWAAVAVQLAWRRYKHRLTLTSLSFIRPR.

The protein belongs to the cyclic nucleotide-gated cation channel (TC 1.A.1.5) family. In terms of assembly, homotetramer or heterotetramer.

It is found in the cell membrane. In terms of biological role, acts as a cyclic nucleotide-gated ion channel. Permeable to potassium and sodium in a cyclic nucleotide-dependent fashion (cAMP or cGMP). Might constitute a common downstream component of the signaling pathways leading to hypersensitive response (HR). This chain is Cyclic nucleotide-gated ion channel 4 (CNGC4), found in Arabidopsis thaliana (Mouse-ear cress).